The following is a 242-amino-acid chain: 4-hydroxy-tetrahydrodipicolinate reductase (242 aa).

NAD(+) contacts are provided by residues 8–13 (GSNGRM), 75–77 (GTT), and 99–102 (ATNM). Catalysis depends on His-131, which acts as the Proton donor/acceptor. His-132 contacts (S)-2,3,4,5-tetrahydrodipicolinate. Catalysis depends on Lys-135, which acts as the Proton donor. 141-142 (GT) provides a ligand contact to (S)-2,3,4,5-tetrahydrodipicolinate.

Belongs to the DapB family.

The protein localises to the cytoplasm. The enzyme catalyses (S)-2,3,4,5-tetrahydrodipicolinate + NAD(+) + H2O = (2S,4S)-4-hydroxy-2,3,4,5-tetrahydrodipicolinate + NADH + H(+). The catalysed reaction is (S)-2,3,4,5-tetrahydrodipicolinate + NADP(+) + H2O = (2S,4S)-4-hydroxy-2,3,4,5-tetrahydrodipicolinate + NADPH + H(+). Its pathway is amino-acid biosynthesis; L-lysine biosynthesis via DAP pathway; (S)-tetrahydrodipicolinate from L-aspartate: step 4/4. Catalyzes the conversion of 4-hydroxy-tetrahydrodipicolinate (HTPA) to tetrahydrodipicolinate. The sequence is that of 4-hydroxy-tetrahydrodipicolinate reductase from Campylobacter lari (strain RM2100 / D67 / ATCC BAA-1060).